Reading from the N-terminus, the 553-residue chain is Muellerian-inhibiting factor (553 aa).

Residues 1–22 (MQGPHLSLLLLLLATMGAVLQA) form the signal peptide. Positions 23-445 (DTVEELTNTR…GREGRGRAGR (423 aa)) are excised as a propeptide. N-linked (GlcNAc...) asparagine glycans are attached at residues N325 and N409. Intrachain disulfides connect C455/C519, C481/C550, and C485/C552.

Belongs to the TGF-beta family. Homodimer; disulfide-linked. Post-translationally, preproprotein is proteolytically processed to generate N- and C-terminal cleavage products that homodimerize and associate to form a biologically active non-covalent complex. Binding of the non-covalent complex to AMHR2 induces dissociation of the pro-region from the mature C-terminal dimer. The N-terminal portion of the protein, despite having no intrinsic activity, has the role of amplifying the activity of the C-terminus. As to expression, mainly expressed in granulosa cells from preantral and small antral follicles.

Its subcellular location is the secreted. In terms of biological role, plays an important role in several reproductive functions. Induces Muellerian duct regression during male fetal sexual differentiation and plays a role in Leydig cell differentiation and function. In female acts as a negative regulator of the primordial to primary follicle transition and decreases FSH sensitivity of growing follicles. AMH signals by binding to a specific type-II receptor, AMHR2, that heterodimerizes with type-I receptors (ACVR1 and BMPR1A), and recruiting SMAD proteins that are translocated to the nucleus to regulate target gene expression. The protein is Muellerian-inhibiting factor (Amh) of Rattus norvegicus (Rat).